Consider the following 70-residue polypeptide: Palustrin-2ISa (70 aa).

The signal sequence occupies residues 1-22; the sequence is MFTLKKSLLLLFFLGTISLSLC. Residues 23–39 constitute a propeptide, removed in mature form; the sequence is EQERSAEDEGEVIEEEV. Cysteine 64 and cysteine 70 are joined by a disulfide.

In terms of tissue distribution, expressed by the skin glands.

Its subcellular location is the secreted. In terms of biological role, has antimicrobial activity against Gram-negative bacterium E.coli ATCC 8739 (MIC=100 ug), against Gram positive bacteria S.aureus ATCC 6538 (MIC=25 ug), methicillin-resistant S.aureus ATCC 43300 (MIC=100 ug), B.subtilis ATCC 6633 (MIC=12.5 ug) and against fungus C.albicans ATCC 90028 (MIC=100 ug). This is Palustrin-2ISa from Odorrana ishikawae (Ishikawa's frog).